The primary structure comprises 252 residues: UPF0273 protein MK0039 (252 aa).

A KaiC domain is found at 4–248 (ERVSTGIPGM…VFVKERGEVR (245 aa)). 31-38 (GGPGTGKT) is a binding site for ATP.

The protein belongs to the UPF0273 family.

In Methanopyrus kandleri (strain AV19 / DSM 6324 / JCM 9639 / NBRC 100938), this protein is UPF0273 protein MK0039.